The following is a 515-amino-acid chain: GMP synthase [glutamine-hydrolyzing] (515 aa).

The region spanning 6–198 is the Glutamine amidotransferase type-1 domain; the sequence is KVIIIDYGSQ…LFHVAKLKAD (193 aa). Cys83 serves as the catalytic Nucleophile. Residues His172 and Glu174 contribute to the active site. Positions 199 to 390 constitute a GMPS ATP-PPase domain; sequence WTMSSFVERA…LGLPDFIIWR (192 aa). Residue 226–232 coordinates ATP; that stretch reads SGGIDST.

As to quaternary structure, homodimer.

The catalysed reaction is XMP + L-glutamine + ATP + H2O = GMP + L-glutamate + AMP + diphosphate + 2 H(+). Its pathway is purine metabolism; GMP biosynthesis; GMP from XMP (L-Gln route): step 1/1. Functionally, catalyzes the synthesis of GMP from XMP. The polypeptide is GMP synthase [glutamine-hydrolyzing] (Nitratidesulfovibrio vulgaris (strain DP4) (Desulfovibrio vulgaris)).